The sequence spans 154 residues: Ribosomal RNA-processing protein 14-N (154 aa).

The tract at residues 36–154 (WKQKKSTLEE…KHKASPRAGF (119 aa)) is disordered. Residue Ser-80 is modified to Phosphoserine. Thr-83 is modified (phosphothreonine). A compositionally biased stretch (basic and acidic residues) spans 105–133 (QDLREKRKAGDLNQKRQNKRPVENEKDSQ). Over residues 140–154 (KVQKKKHKASPRAGF) the composition is skewed to basic residues.

The protein belongs to the SURF6 family.

The protein resides in the nucleus. The protein localises to the nucleolus. In terms of biological role, involved in ribosome biogenesis and cell polarity. Required for the synthesis of both 40S and 60S ribosomal subunits and may also play some direct role in correct positioning of the mitotic spindle during mitosis. This Schizosaccharomyces pombe (strain 972 / ATCC 24843) (Fission yeast) protein is Ribosomal RNA-processing protein 14-N (rrp14n).